Reading from the N-terminus, the 102-residue chain is Co-chaperonin GroES (102 aa).

It belongs to the GroES chaperonin family. As to quaternary structure, heptamer of 7 subunits arranged in a ring. Interacts with the chaperonin GroEL.

Its subcellular location is the cytoplasm. Its function is as follows. Together with the chaperonin GroEL, plays an essential role in assisting protein folding. The GroEL-GroES system forms a nano-cage that allows encapsulation of the non-native substrate proteins and provides a physical environment optimized to promote and accelerate protein folding. GroES binds to the apical surface of the GroEL ring, thereby capping the opening of the GroEL channel. This chain is Co-chaperonin GroES, found in Anabaena sp. (strain L31).